Here is an 82-residue protein sequence, read N- to C-terminus: MRTLLLTLVVVTIVCLDLGNSLICYVSEYGAKMTCPEGKTLCEKYAVPLMQGHFYFAWRCTSTCKAGAYNICCSTDLCNKIP.

The first 21 residues, 1–21 (MRTLLLTLVVVTIVCLDLGNS), serve as a signal peptide directing secretion. Disulfide bonds link Cys24–Cys42, Cys35–Cys60, Cys64–Cys72, and Cys73–Cys78.

Belongs to the three-finger toxin family. Short-chain subfamily. As to expression, expressed by the venom gland.

The protein localises to the secreted. This Micrurus altirostris (Uruguayan coral snake) protein is Three-finger toxin MALT0063C.